A 757-amino-acid chain; its full sequence is Xaa-Pro dipeptidyl-peptidase (757 aa).

Active-site charge relay system residues include serine 348, aspartate 468, and histidine 498.

This sequence belongs to the peptidase S15 family. As to quaternary structure, homodimer.

The protein localises to the cytoplasm. The catalysed reaction is Hydrolyzes Xaa-Pro-|- bonds to release unblocked, N-terminal dipeptides from substrates including Ala-Pro-|-p-nitroanilide and (sequentially) Tyr-Pro-|-Phe-Pro-|-Gly-Pro-|-Ile.. In terms of biological role, removes N-terminal dipeptides sequentially from polypeptides having unsubstituted N-termini provided that the penultimate residue is proline. This is Xaa-Pro dipeptidyl-peptidase from Streptococcus pneumoniae serotype 19F (strain G54).